Reading from the N-terminus, the 147-residue chain is Hemoglobin subunit epsilon-2 (147 aa).

Positions 3-147 (HFTTEENVAV…VANALTHKYH (145 aa)) constitute a Globin domain. Positions 64 and 93 each coordinate heme b.

This sequence belongs to the globin family. In terms of tissue distribution, red blood cells.

In terms of biological role, hemoglobin epsilon chain is a beta-type chain found in early embryos. The protein is Hemoglobin subunit epsilon-2 (HBE2) of Bos taurus (Bovine).